The sequence spans 374 residues: Probable plastid-lipid-associated protein 3, chloroplastic (374 aa).

A chloroplast-targeting transit peptide spans 1 to 46; it reads MAMPPPLFAAASHASLLLPSPTIHSSTGSRRPFRLPLRSSRRPPVA. Residues 19-148 are disordered; the sequence is PSPTIHSSTG…EDNEEERREE (130 aa). Low complexity predominate over residues 28 to 54; that stretch reads GSRRPFRLPLRSSRRPPVAAAAASGVP. Pro residues-rich tracts occupy residues 64–73 and 127–136; these read APEPPSQPDP and PAPPPPPPPV.

It belongs to the PAP/fibrillin family.

Its subcellular location is the plastid. It localises to the chloroplast. The polypeptide is Probable plastid-lipid-associated protein 3, chloroplastic (PAP3) (Oryza sativa subsp. japonica (Rice)).